The sequence spans 346 residues: Endo-1,4-beta-xylanase B (346 aa).

The signal sequence occupies residues 1 to 19 (MKGLPALLLLLIGCVSSFG). One can recognise a GH10 domain in the interval 41 to 338 (GNNFWSLPDA…KPCYFAIREL (298 aa)). Glutamate 153 acts as the Proton donor in catalysis. Catalysis depends on glutamate 259, which acts as the Nucleophile.

It belongs to the glycosyl hydrolase 10 (cellulase F) family.

It carries out the reaction Endohydrolysis of (1-&gt;4)-beta-D-xylosidic linkages in xylans.. This is Endo-1,4-beta-xylanase B (xynB) from Thermotoga neapolitana.